The sequence spans 511 residues: 2-isopropylmalate synthase (511 aa).

One can recognise a Pyruvate carboxyltransferase domain in the interval 6-269 (IIIFDTTLRD…YTDIKCENIF (264 aa)). Positions 15, 203, 205, and 239 each coordinate Mn(2+). Positions 394-511 (VIEKLSVISG…SLKVEERKMA (118 aa)) are regulatory domain.

It belongs to the alpha-IPM synthase/homocitrate synthase family. LeuA type 1 subfamily. As to quaternary structure, homodimer. The cofactor is Mn(2+).

It localises to the cytoplasm. It catalyses the reaction 3-methyl-2-oxobutanoate + acetyl-CoA + H2O = (2S)-2-isopropylmalate + CoA + H(+). It functions in the pathway amino-acid biosynthesis; L-leucine biosynthesis; L-leucine from 3-methyl-2-oxobutanoate: step 1/4. Catalyzes the condensation of the acetyl group of acetyl-CoA with 3-methyl-2-oxobutanoate (2-ketoisovalerate) to form 3-carboxy-3-hydroxy-4-methylpentanoate (2-isopropylmalate). In Campylobacter jejuni (strain RM1221), this protein is 2-isopropylmalate synthase.